We begin with the raw amino-acid sequence, 388 residues long: MVDNKIPEPGPAKLKRNAGPDEWLEAAKDCKYLSEQHMKQLCEIVKEYMMEESNIQPVSTPVTICGDIHGQFYDLLELFRVSGGMPDGSEAEAPKTQSAVITSDDIEPPSTISDPKLRKKLRNTFAPEDGSEDSSASQRDRSSSSGSRDVELKRNFVFLGDYVDRGYFSLETLTLLLCLKAKYPDRVTLVRGNHESRQITQVYGFYEECFQKYGNASVWKACCQVFDFMTLGAIIDGRVLCVHGGLSPEIRTLDQVRVVARAQEIPHEGAFCDLVWSDPDDVETWAVSPRGAGWLFGDKVADEFCHVNDLTLIARAHQLVNEGYKYHFANQNVVTVWSAPNYCYRCGNLASVCEIGDDLKPTFKLFSAVSDDQRHVPVSRPGRSEYFL.

Positions 67 and 69 each coordinate Mn(2+). Residues P86–G146 form a disordered region. Residues D161 and N193 each coordinate Mn(2+). H194 functions as the Proton donor in the catalytic mechanism. Residues H243 and H317 each coordinate Mn(2+).

The protein belongs to the PPP phosphatase family. PP-6 (PP-V) subfamily. The cofactor is Mn(2+).

It catalyses the reaction O-phospho-L-threonyl-[protein] + H2O = L-threonyl-[protein] + phosphate. Functionally, protein phosphatase that acts as a modulator of pkcA/mpkA activity involved in the cell wall integrity pathway. Plays an important role in regulation of adhesion, cell wall integrity, biofilm formation, and virulence. This Aspergillus fumigatus (strain ATCC MYA-4609 / CBS 101355 / FGSC A1100 / Af293) (Neosartorya fumigata) protein is Serine/threonine-protein phosphatase sitA.